The chain runs to 1171 residues: ATP-dependent helicase/deoxyribonuclease subunit B (1171 aa).

The 390-residue stretch at 1–390 (MSLRFVIGRA…HPLVECIRSA (390 aa)) folds into the UvrD-like helicase ATP-binding domain. ATP is bound at residue 8–15 (GRAGSGKS). The UvrD-like helicase C-terminal domain maps to 281–587 (MEQPRFHSPA…QFANIPPSLD (307 aa)). 4 residues coordinate [4Fe-4S] cluster: Cys-805, Cys-1129, Cys-1132, and Cys-1138.

The protein belongs to the helicase family. AddB/RexB type 1 subfamily. As to quaternary structure, heterodimer of AddA and AddB. It depends on Mg(2+) as a cofactor. [4Fe-4S] cluster serves as cofactor.

Functionally, the heterodimer acts as both an ATP-dependent DNA helicase and an ATP-dependent, dual-direction single-stranded exonuclease. Recognizes the chi site generating a DNA molecule suitable for the initiation of homologous recombination. The AddB subunit has 5' -&gt; 3' nuclease activity but not helicase activity. The protein is ATP-dependent helicase/deoxyribonuclease subunit B of Bacillus cereus (strain ZK / E33L).